Here is a 177-residue protein sequence, read N- to C-terminus: Small ribosomal subunit protein uS4 (177 aa).

In terms of domain architecture, S4 RNA-binding spans 104-166; the sequence is RRLQTIVYKK…PTSPFKQHPP (63 aa). Residues 158 to 177 form a disordered region; that stretch reads TSPFKQHPPTQQGEENVQQA. Positions 165–177 are enriched in polar residues; the sequence is PPTQQGEENVQQA.

The protein belongs to the universal ribosomal protein uS4 family. Part of the 30S ribosomal subunit. Contacts protein S5. The interaction surface between S4 and S5 is involved in control of translational fidelity.

Functionally, one of the primary rRNA binding proteins, it binds directly to 16S rRNA where it nucleates assembly of the body of the 30S subunit. Its function is as follows. With S5 and S12 plays an important role in translational accuracy. This is Small ribosomal subunit protein uS4 from Sulfurisphaera tokodaii (strain DSM 16993 / JCM 10545 / NBRC 100140 / 7) (Sulfolobus tokodaii).